The chain runs to 1194 residues: Peroxisomal ATPase PEX1 (1194 aa).

The interval 220-255 is disordered; sequence KTRQRRMSHQGKSVKAKSLASTRHGKRRDDGSGPSG. Basic residues predominate over residues 221-234; it reads TRQRRMSHQGKSVK. Residues 538–730 are AAA-cassette D1; that stretch reads RSASVLLTGA…GPEPTLKIEK (193 aa). Residues 546–553 and 849–856 contribute to the ATP site; these read GARGSGKT and GYPGCGKT. An AAA-cassette D2 region spans residues 844–1028; it reads GLLLYGYPGC…LYNAHLEAIH (185 aa). Disordered stretches follow at residues 1062-1084, 1116-1139, and 1174-1194; these read YISF…LTNG, QVQQ…EPVI, and RSGE…SSLM. The span at 1066-1084 shows a compositional bias: polar residues; it reads SMGNKDSTGEPSTQPLTNG. Residues 1116 to 1127 are compositionally biased toward low complexity; sequence QVQQQQSQTNQA.

The protein belongs to the AAA ATPase family. In terms of assembly, interacts with PEX6; forming the PEX1-PEX6 AAA ATPase complex, which is composed of a heterohexamer formed by a trimer of PEX1-PEX6 dimers.

The protein resides in the cytoplasm. Its subcellular location is the cytosol. It localises to the peroxisome membrane. It carries out the reaction ATP + H2O = ADP + phosphate + H(+). Functionally, component of the PEX1-PEX6 AAA ATPase complex, a protein dislocase complex that mediates the ATP-dependent extraction of the PEX5 receptor from peroxisomal membranes, an essential step for PEX5 recycling. Specifically recognizes PEX5 monoubiquitinated at 'Cys-6', and pulls it out of the peroxisome lumen through the PEX2-PEX10-PEX12 retrotranslocation channel. Extraction by the PEX1-PEX6 AAA ATPase complex is accompanied by unfolding of the TPR repeats and release of bound cargo from PEX5. Regulates autophagy and biogenesis of peroxisomes and Woronin bodies. Plays important roles in mycelial growth and development and stress response. Is also essential for conidiation and fatty acid utilization. Required for nematode predation via trap formation. The polypeptide is Peroxisomal ATPase PEX1 (Arthrobotrys oligospora (strain ATCC 24927 / CBS 115.81 / DSM 1491) (Nematode-trapping fungus)).